Here is a 482-residue protein sequence, read N- to C-terminus: tRNA sulfurtransferase (482 aa).

Positions 61–165 (AQYLETLACI…NDELYIISAV (105 aa)) constitute a THUMP domain. ATP contacts are provided by residues 183–184 (LL), lysine 265, glycine 287, and glutamine 296. Cysteine 344 and cysteine 456 are oxidised to a cystine. Positions 404–482 (LAADEVILDI…GFDNVKVYRP (79 aa)) constitute a Rhodanese domain. The active-site Cysteine persulfide intermediate is the cysteine 456.

This sequence belongs to the ThiI family.

It localises to the cytoplasm. The catalysed reaction is [ThiI sulfur-carrier protein]-S-sulfanyl-L-cysteine + a uridine in tRNA + 2 reduced [2Fe-2S]-[ferredoxin] + ATP + H(+) = [ThiI sulfur-carrier protein]-L-cysteine + a 4-thiouridine in tRNA + 2 oxidized [2Fe-2S]-[ferredoxin] + AMP + diphosphate. It carries out the reaction [ThiS sulfur-carrier protein]-C-terminal Gly-Gly-AMP + S-sulfanyl-L-cysteinyl-[cysteine desulfurase] + AH2 = [ThiS sulfur-carrier protein]-C-terminal-Gly-aminoethanethioate + L-cysteinyl-[cysteine desulfurase] + A + AMP + 2 H(+). Its pathway is cofactor biosynthesis; thiamine diphosphate biosynthesis. Its function is as follows. Catalyzes the ATP-dependent transfer of a sulfur to tRNA to produce 4-thiouridine in position 8 of tRNAs, which functions as a near-UV photosensor. Also catalyzes the transfer of sulfur to the sulfur carrier protein ThiS, forming ThiS-thiocarboxylate. This is a step in the synthesis of thiazole, in the thiamine biosynthesis pathway. The sulfur is donated as persulfide by IscS. In Aeromonas salmonicida (strain A449), this protein is tRNA sulfurtransferase.